The following is a 130-amino-acid chain: Inner membrane protein YqjF (130 aa).

The Cytoplasmic segment spans residues 1 to 5 (MKKLE). The helical transmembrane segment at 6–26 (DVGVLVARILMPILFITAGWG) threads the bilayer. Topologically, residues 27–45 (KITGYAGTQQYMEAMGVPG) are periplasmic. The chain crosses the membrane as a helical span at residues 46-66 (FMLPLVILLEFGGGLAILFGF). Residues 67 to 70 (LTRT) are Cytoplasmic-facing. A helical membrane pass occupies residues 71-91 (TALFTAGFTLLTAFLFHSNFA). Residues 92–101 (EGVNSLMFMK) are Periplasmic-facing. Residues 102–122 (NLTISGGFLLLAITGPGAYSI) traverse the membrane as a helical segment. Topologically, residues 123-130 (DRLLNKKW) are cytoplasmic.

Belongs to the DoxX family.

The protein resides in the cell inner membrane. This is Inner membrane protein YqjF (yqjF) from Escherichia coli (strain K12).